Consider the following 270-residue polypeptide: ATP synthase subunit b 1 (270 aa).

The helical transmembrane segment at 2–22 threads the bilayer; the sequence is LIDWFTVIAQLINFLVLVWLL.

This sequence belongs to the ATPase B chain family. In terms of assembly, F-type ATPases have 2 components, F(1) - the catalytic core - and F(0) - the membrane proton channel. F(1) has five subunits: alpha(3), beta(3), gamma(1), delta(1), epsilon(1). F(0) has three main subunits: a(1), b(2) and c(10-14). The alpha and beta chains form an alternating ring which encloses part of the gamma chain. F(1) is attached to F(0) by a central stalk formed by the gamma and epsilon chains, while a peripheral stalk is formed by the delta and b chains.

It localises to the cell inner membrane. Functionally, f(1)F(0) ATP synthase produces ATP from ADP in the presence of a proton or sodium gradient. F-type ATPases consist of two structural domains, F(1) containing the extramembraneous catalytic core and F(0) containing the membrane proton channel, linked together by a central stalk and a peripheral stalk. During catalysis, ATP synthesis in the catalytic domain of F(1) is coupled via a rotary mechanism of the central stalk subunits to proton translocation. Its function is as follows. Component of the F(0) channel, it forms part of the peripheral stalk, linking F(1) to F(0). This chain is ATP synthase subunit b 1, found in Marinomonas sp. (strain MWYL1).